We begin with the raw amino-acid sequence, 116 residues long: Non-specific lipid-transfer protein 5 (116 aa).

Residues 1–24 (MARSMKLACVVLVMCMIVAPMAEG) form the signal peptide. 4 cysteine pairs are disulfide-bonded: Cys28-Cys75, Cys38-Cys52, Cys53-Cys98, and Cys73-Cys112.

The protein belongs to the plant LTP family.

Functionally, plant non-specific lipid-transfer proteins transfer phospholipids as well as galactolipids across membranes. May play a role in wax or cutin deposition in the cell walls of expanding epidermal cells and certain secretory tissues. This is Non-specific lipid-transfer protein 5 from Lens culinaris (Lentil).